A 485-amino-acid chain; its full sequence is Fumarate hydratase, mitochondrial (485 aa).

A mitochondrion-targeting transit peptide spans 1–19; sequence MLSASRKLNNQQFLKTIRN. Substrate is bound by residues 118–120, 150–153, 160–162, and Thr-208; these read SGT, HPND, and SSN. Catalysis depends on His-209, which acts as the Proton donor/acceptor. Residue Ser-339 is part of the active site. Residues Ser-340 and 345–347 each bind substrate; that span reads KVN.

This sequence belongs to the class-II fumarase/aspartase family. Fumarase subfamily. Homotetramer.

Its subcellular location is the mitochondrion. It is found in the cytoplasm. It carries out the reaction (S)-malate = fumarate + H2O. The protein operates within carbohydrate metabolism; tricarboxylic acid cycle; (S)-malate from fumarate: step 1/1. Its function is as follows. Catalyzes the reversible stereospecific interconversion of fumarate to L-malate. Catalyzes the hydration of fumarate to L-malate in the tricarboxylic acid (TCA) cycle to facilitate a transition step in the production of energy in the form of NADH. The protein is Fumarate hydratase, mitochondrial of Dictyostelium discoideum (Social amoeba).